The primary structure comprises 554 residues: Glucose-6-phosphate isomerase (554 aa).

E359 acts as the Proton donor in catalysis. Active-site residues include H390 and K518.

The protein belongs to the GPI family.

The protein resides in the cytoplasm. The catalysed reaction is alpha-D-glucose 6-phosphate = beta-D-fructose 6-phosphate. Its pathway is carbohydrate biosynthesis; gluconeogenesis. It participates in carbohydrate degradation; glycolysis; D-glyceraldehyde 3-phosphate and glycerone phosphate from D-glucose: step 2/4. Its function is as follows. Catalyzes the reversible isomerization of glucose-6-phosphate to fructose-6-phosphate. This Pseudomonas syringae pv. syringae (strain B728a) protein is Glucose-6-phosphate isomerase.